We begin with the raw amino-acid sequence, 228 residues long: Ribosomal RNA small subunit methyltransferase G (228 aa).

S-adenosyl-L-methionine-binding positions include Gly-89, Leu-94, 140 to 141 (VE), and Arg-159.

The protein belongs to the methyltransferase superfamily. RNA methyltransferase RsmG family.

The protein localises to the cytoplasm. The catalysed reaction is guanosine(527) in 16S rRNA + S-adenosyl-L-methionine = N(7)-methylguanosine(527) in 16S rRNA + S-adenosyl-L-homocysteine. Its function is as follows. Specifically methylates the N7 position of guanine in position 527 of 16S rRNA. The chain is Ribosomal RNA small subunit methyltransferase G from Burkholderia lata (strain ATCC 17760 / DSM 23089 / LMG 22485 / NCIMB 9086 / R18194 / 383).